Here is a 442-residue protein sequence, read N- to C-terminus: UBX domain-containing protein 6 (442 aa).

The segment at Met-1–Ala-10 is mediates interaction with LMAN1. Positions Lys-13 to Glu-111 are disordered. Ser-36 carries the post-translational modification Phosphoserine. Positions Glu-51–Leu-63 are VCP/p97-interacting motif (VIM). The segment covering Ala-52–Ala-61 has biased composition (low complexity). The segment covering Glu-90–Val-105 has biased composition (polar residues). The PUB domain occupies Val-175–Glu-244. The 77-residue stretch at Arg-332–Phe-408 folds into the UBX domain.

Interacts with VCP through the PUB domain (via C-terminus) and VIM motif (via N-terminus); the interaction is direct. Forms a ternary complex with CAV1 and VCP. Interacts with SYVN1. Interacts with HERPUD1. Interacts with VCPKMT. May interact with DERL1. Interacts with PLAA, VCP and YOD1; may form a complex involved in macroautophagy. Interacts with LMAN1. As to expression, widely expressed (at protein level). Highest expression in brain (at protein level).

It is found in the cytoplasm. The protein resides in the cytosol. Its subcellular location is the membrane. It localises to the nucleus. The protein localises to the cytoskeleton. It is found in the microtubule organizing center. The protein resides in the centrosome. Its subcellular location is the early endosome membrane. It localises to the late endosome membrane. The protein localises to the lysosome membrane. Its function is as follows. May negatively regulate the ATPase activity of VCP, an ATP-driven segregase that associates with different cofactors to control a wide variety of cellular processes. As a cofactor of VCP, it may play a role in the transport of CAV1 to lysosomes for degradation. It may also play a role in endoplasmic reticulum-associated degradation (ERAD) of misfolded proteins. Together with VCP and other cofactors, it may play a role in macroautophagy, regulating for instance the clearance of damaged lysosomes. This Mus musculus (Mouse) protein is UBX domain-containing protein 6.